A 283-amino-acid chain; its full sequence is Phosphatidylglycerol--prolipoprotein diacylglyceryl transferase (283 aa).

The next 3 membrane-spanning stretches (helical) occupy residues 14–34, 56–76, and 88–108; these read LGPLAVHWYGLMYLLGFALFL, MLMYGAVGVVVGGRLGEVLFY, and IFMVWKGGMSFHGGFLGVLIA. R139 contacts a 1,2-diacyl-sn-glycero-3-phospho-(1'-sn-glycerol). Residues 258–278 traverse the membrane as a helical segment; sequence MGQWLSLPMIVIGVALLVFFG.

It belongs to the Lgt family.

It is found in the cell inner membrane. It carries out the reaction L-cysteinyl-[prolipoprotein] + a 1,2-diacyl-sn-glycero-3-phospho-(1'-sn-glycerol) = an S-1,2-diacyl-sn-glyceryl-L-cysteinyl-[prolipoprotein] + sn-glycerol 1-phosphate + H(+). Its pathway is protein modification; lipoprotein biosynthesis (diacylglyceryl transfer). Its function is as follows. Catalyzes the transfer of the diacylglyceryl group from phosphatidylglycerol to the sulfhydryl group of the N-terminal cysteine of a prolipoprotein, the first step in the formation of mature lipoproteins. The chain is Phosphatidylglycerol--prolipoprotein diacylglyceryl transferase from Chromobacterium violaceum (strain ATCC 12472 / DSM 30191 / JCM 1249 / CCUG 213 / NBRC 12614 / NCIMB 9131 / NCTC 9757 / MK).